The following is a 184-amino-acid chain: Inosine triphosphate pyrophosphatase (184 aa).

10–15 is an ITP binding site; it reads TGNANK. Glu38 is a binding site for Mg(2+). ITP contacts are provided by residues Lys50, 66 to 67, Lys83, 142 to 145, Lys163, and 168 to 169; these read DT, FGWD, and HR.

It belongs to the HAM1 NTPase family. In terms of assembly, homodimer. Requires Mg(2+) as cofactor. Mn(2+) is required as a cofactor.

It is found in the cytoplasm. The protein localises to the nucleus. It catalyses the reaction ITP + H2O = IMP + diphosphate + H(+). The enzyme catalyses dITP + H2O = dIMP + diphosphate + H(+). It carries out the reaction XTP + H2O = XMP + diphosphate + H(+). Its function is as follows. Pyrophosphatase that hydrolyzes non-canonical purine nucleotides such as inosine triphosphate (ITP), deoxyinosine triphosphate (dITP) or xanthosine 5'-triphosphate (XTP) to their respective monophosphate derivatives. The enzyme does not distinguish between the deoxy- and ribose forms. Probably excludes non-canonical purines from RNA and DNA precursor pools, thus preventing their incorporation into RNA and DNA and avoiding chromosomal lesions. The sequence is that of Inosine triphosphate pyrophosphatase from Fusarium vanettenii (strain ATCC MYA-4622 / CBS 123669 / FGSC 9596 / NRRL 45880 / 77-13-4) (Fusarium solani subsp. pisi).